Reading from the N-terminus, the 434-residue chain is NADH-quinone oxidoreductase subunit F 1 (434 aa).

54–63 (GRGGAGFPTG) is an NAD(+) binding site. 166-213 (GAGAYICGEETALLESLEGKKGQPRLKPPFPANMGLYGCPTTVNNVES) contacts FMN. Residues cysteine 345, cysteine 348, cysteine 351, and cysteine 391 each coordinate [4Fe-4S] cluster.

The protein belongs to the complex I 51 kDa subunit family. The cofactor is FMN. [4Fe-4S] cluster is required as a cofactor.

The catalysed reaction is a quinone + NADH + 5 H(+)(in) = a quinol + NAD(+) + 4 H(+)(out). Its function is as follows. NDH-1 shuttles electrons from NADH, via FMN and iron-sulfur (Fe-S) centers, to quinones in the respiratory chain. The immediate electron acceptor for the enzyme in this species is believed to be ubiquinone. Couples the redox reaction to proton translocation (for every two electrons transferred, four hydrogen ions are translocated across the cytoplasmic membrane), and thus conserves the redox energy in a proton gradient. The protein is NADH-quinone oxidoreductase subunit F 1 (nuoF1) of Rhizobium meliloti (strain 1021) (Ensifer meliloti).